The chain runs to 32 residues: MSFTHFLALYSFLLERAWLHQQPAPMGHAREI.

This is an uncharacterized protein from Gallus gallus (Chicken).